Here is a 431-residue protein sequence, read N- to C-terminus: O-Mevalon transferase macI (431 aa).

The N-linked (GlcNAc...) asparagine glycan is linked to Asn176. A run of 4 helical transmembrane segments spans residues 198–218 (IYALIVCGFAITIYSHFAILM), 301–321 (LLMMSFVISGLIHACGTYQVT), 336–356 (YFALQGMAIIAEDFGCWVLGI), and 404–424 (LFAALELVRVSAVAVPGNFVA).

The protein belongs to the wax synthase family.

The protein resides in the membrane. The protein operates within secondary metabolite biosynthesis; terpenoid biosynthesis. Its function is as follows. O-Mevalon transferase; part of the gene cluster that mediates the biosynthesis of macrophorins, isoprenoid epoxycyclohexenones containing cyclized drimane moieties. The first step of the pathway is the synthesis of 6-methylsalicylic acid (6-MSA) by the polyketide synthase macA. 6-MSA is then converted to m-cresol by the decarboxylase macB. The cytochrome P450 monooxygenase macC then catalyzes the oxidation of m-cresol to toluquinol. Epoxidation of toluquinol is then performed by the short chain dehydrogenase macD, with the help of macE, and a further prenylation by macG leads to 7-deacetoxyyanuthone A. The next step is the hydroxylation of C-22 of 7-deacetoxyyanuthone A by the cytochrome P450 monooxygenase macH to yield 22-deacetylyanuthone A. O-Mevalon transferase macI then attaches mevalon to the hydroxyl group of 22-deacetylyanuthone A to produce yanuthone E. The terpene cyclase macJ catalyzes the cyclization of 22-deacetylyanuthone A to macrophorin A. MacJ is also able to catalyze cyclization of yanuthone E and 7-deacetoxyyanuthone A to their corresponding macrophorins. The macJ products can be further modified by macH and macJ, as well as by the FAD-dependent monooxygenase macF, to produce additional macrophorins, including 4'-oxomacrophorin A, 4'-oxomacrophorin D and 4'-oxomacrophorin E. The polypeptide is O-Mevalon transferase macI (Penicillium terrestre).